A 122-amino-acid chain; its full sequence is Large ribosomal subunit protein uL14 (122 aa).

Belongs to the universal ribosomal protein uL14 family. As to quaternary structure, part of the 50S ribosomal subunit. Forms a cluster with proteins L3 and L19. In the 70S ribosome, L14 and L19 interact and together make contacts with the 16S rRNA in bridges B5 and B8.

Functionally, binds to 23S rRNA. Forms part of two intersubunit bridges in the 70S ribosome. The sequence is that of Large ribosomal subunit protein uL14 from Cereibacter sphaeroides (strain ATCC 17029 / ATH 2.4.9) (Rhodobacter sphaeroides).